The following is a 325-amino-acid chain: ATP phosphoribosyltransferase (325 aa).

The protein belongs to the ATP phosphoribosyltransferase family. Long subfamily. The cofactor is Mg(2+).

It is found in the cytoplasm. The enzyme catalyses 1-(5-phospho-beta-D-ribosyl)-ATP + diphosphate = 5-phospho-alpha-D-ribose 1-diphosphate + ATP. It functions in the pathway amino-acid biosynthesis; L-histidine biosynthesis; L-histidine from 5-phospho-alpha-D-ribose 1-diphosphate: step 1/9. With respect to regulation, feedback inhibited by histidine. In terms of biological role, catalyzes the condensation of ATP and 5-phosphoribose 1-diphosphate to form N'-(5'-phosphoribosyl)-ATP (PR-ATP). Has a crucial role in the pathway because the rate of histidine biosynthesis seems to be controlled primarily by regulation of HisG enzymatic activity. The protein is ATP phosphoribosyltransferase of Bradyrhizobium diazoefficiens (strain JCM 10833 / BCRC 13528 / IAM 13628 / NBRC 14792 / USDA 110).